A 414-amino-acid polypeptide reads, in one-letter code: Phosphoglycerate kinase (414 aa).

Residues Val-23, Asp-24, Phe-25, Asn-26, Arg-39, Ser-62, His-63, Gly-65, and Arg-66 each coordinate (2R)-3-phosphoglycerate. Tyr-75 carries the phosphotyrosine modification. Ser-76 carries the phosphoserine modification. Positions 121 and 122 each coordinate (2R)-3-phosphoglycerate. Ser-143 bears the Phosphoserine mark. (2R)-3-phosphoglycerate contacts are provided by His-168 and Arg-169. A phosphoserine mark is found at Ser-172, Ser-173, and Ser-183. Gly-211 lines the ADP pocket. Residue Gly-211 coordinates CDP. AMP contacts are provided by Ala-212 and Lys-213. Ala-212 serves as a coordination point for ATP. Ala-212 contacts Mg(2+). The Mg(2+) site is built by Ala-215 and Asp-216. Asp-216 lines the CDP pocket. Residue Lys-217 participates in AMP binding. Lys-217 lines the ATP pocket. Residue Gly-235 coordinates ADP. Residue Gly-235 participates in CDP binding. AMP is bound at residue Gly-236. Gly-236 lines the ATP pocket. Ser-253 and Ser-260 each carry phosphoserine. Thr-299 is subject to Phosphothreonine. An AMP-binding site is contributed by Gly-310. Gly-310 serves as a coordination point for ATP. A Phosphoserine modification is found at Ser-328. Positions 335, 337, and 340 each coordinate CDP. Phe-340 is an ADP binding site. Glu-341 serves as a coordination point for AMP. Glu-341 contributes to the ATP binding site. Residue Ser-351 is modified to Phosphoserine. Asp-372 and Thr-373 together coordinate ATP. Position 372 (Asp-372) interacts with Mg(2+). The residue at position 373 (Thr-373) is a Phosphothreonine. 4 positions are modified to phosphoserine: Ser-387, Ser-390, Ser-412, and Ser-413.

The protein belongs to the phosphoglycerate kinase family. As to quaternary structure, monomer. Mg(2+) serves as cofactor.

It localises to the cytoplasm. Its subcellular location is the mitochondrion. It carries out the reaction (2R)-3-phosphoglycerate + ATP = (2R)-3-phospho-glyceroyl phosphate + ADP. It participates in carbohydrate degradation; glycolysis; pyruvate from D-glyceraldehyde 3-phosphate: step 2/5. Its function is as follows. Catalyzes one of the two ATP producing reactions in the glycolytic pathway via the reversible conversion of 1,3-diphosphoglycerate to 3-phosphoglycerate. Both L- and D- forms of purine and pyrimidine nucleotides can be used as substrates, but the activity is much lower on pyrimidines. Negatively regulates the biosynthesis of acetyl-CoA from pyruvate in the mitochondrion. The protein is Phosphoglycerate kinase (pgk1) of Schizosaccharomyces pombe (strain 972 / ATCC 24843) (Fission yeast).